A 209-amino-acid chain; its full sequence is MGKVYVFDHPLIQHKLTYIRDKNTGTKEFRELVEEVATLMAFEITRDLPLEEVEIETPVSKAKSKVIAGKKLGVIPILRAGIGMVDGILKLIPAAKVGHIGLYRDPETLKPVEYYVKLPTDVEERDFIVVDPMLATGGSAVEAINALKKRGAKSIKFMCLIAAPEGVEAVKKAHPDVDIYIAALDEKLNDHGYIVPGLGDAGDRLFGTK.

5-phospho-alpha-D-ribose 1-diphosphate is bound by residues R79, R104, and 131–139; that span reads DPMLATGGS. Uracil-binding positions include I194 and 199-201; that span reads GDA. 5-phospho-alpha-D-ribose 1-diphosphate is bound at residue D200.

It belongs to the UPRTase family. Mg(2+) serves as cofactor.

It carries out the reaction UMP + diphosphate = 5-phospho-alpha-D-ribose 1-diphosphate + uracil. It functions in the pathway pyrimidine metabolism; UMP biosynthesis via salvage pathway; UMP from uracil: step 1/1. Allosterically activated by GTP. Catalyzes the conversion of uracil and 5-phospho-alpha-D-ribose 1-diphosphate (PRPP) to UMP and diphosphate. The polypeptide is Uracil phosphoribosyltransferase (Geobacillus sp. (strain WCH70)).